The chain runs to 782 residues: E3 ubiquitin-protein ligase SopA (782 aa).

The tract at residues 137–171 (VSVSANNRPTVSEGRTPPVSPSLSLQATSSPSSPA) is disordered. Positions 157–171 (PSLSLQATSSPSSPA) are enriched in low complexity. C753 acts as the Glycyl thioester intermediate in catalysis.

This sequence belongs to the SopA E3 ligase family. Ubiquitinated in the presence of host E1 ubiquitin-activating enzyme, E2 ubiquitin-conjugating enzyme and ubiquitin.

Its subcellular location is the secreted. The protein resides in the host cell. The enzyme catalyses S-ubiquitinyl-[E2 ubiquitin-conjugating enzyme]-L-cysteine + [acceptor protein]-L-lysine = [E2 ubiquitin-conjugating enzyme]-L-cysteine + N(6)-ubiquitinyl-[acceptor protein]-L-lysine.. Functionally, effector proteins function to alter host cell physiology and promote bacterial survival in host tissues. This protein is an E3 ubiquitin ligase that interferes with host's ubiquitination pathway. For instance, prevents host innate immune response by ubiquitinating and thus sending to degradation host E3 ubiquitin ligases TRIM56 and TRIM65. This is E3 ubiquitin-protein ligase SopA (sopA) from Salmonella typhimurium (strain 14028s / SGSC 2262).